A 259-amino-acid polypeptide reads, in one-letter code: Keratin-associated protein 10-8 (259 aa).

Residues 26–243 (HVSRVSSPST…SCQPSCCHPA (218 aa)) are 19 X 5 AA repeats of C-C-X(3). A run of 19 repeats spans residues 50–54 (CCEPR), 60–64 (CCTPS), 65–69 (CCAPA), 98–102 (CCQQS), 108–112 (CCTSS), 118–122 (CCVPV), 123–127 (CCKSN), 133–137 (CCVSI), 145–149 (CCQQS), 155–159 (CCTFS), 165–169 (CCVPI), 170–174 (CCKPI), 175–179 (CCVPV), 187–191 (CCQKS), 197–201 (CCTTS), 202–206 (CCRPS), 221–225 (CCVPV), 228–232 (CCVPA), and 239–243 (CCHPA).

Belongs to the KRTAP type 10 family. In terms of assembly, interacts with hair keratins. As to expression, restricted to a narrow region of the hair fiber cuticle, lying approximately 20 cell layers above the apex of the dermal papilla of the hair root; not detected in any other tissues.

In the hair cortex, hair keratin intermediate filaments are embedded in an interfilamentous matrix, consisting of hair keratin-associated proteins (KRTAP), which are essential for the formation of a rigid and resistant hair shaft through their extensive disulfide bond cross-linking with abundant cysteine residues of hair keratins. The matrix proteins include the high-sulfur and high-glycine-tyrosine keratins. This chain is Keratin-associated protein 10-8 (KRTAP10-8), found in Homo sapiens (Human).